A 240-amino-acid chain; its full sequence is Protein unc-119 homolog A (240 aa).

The segment covering 1–12 has biased composition (gly residues); the sequence is MKVKKGGGGTGS. The interval 1–62 is disordered; the sequence is MKVKKGGGGT…PLQGKQPIGP (62 aa). 3 positions are modified to phosphoserine; by CK2: serine 37, serine 39, and serine 41. Residue tyrosine 131 participates in tetradecanoate binding.

Belongs to the PDE6D/unc-119 family. As to quaternary structure, may interact with GTP-bound ARL1. Interacts with ARL2 and ARL3 (GTP-bound forms); this promotes the release of myristoylated cargo proteins. Found in a complex with ARL3, RP2 and UNC119; RP2 induces hydrolysis of GTP ARL3 in the complex, leading to the release of UNC119. Interacts with NPHP3 (when myristoylated). Interacts with CYS1 (when myristoylated). Interacts with MACIR; interaction only takes place when UNC119 is not liganded with myristoylated proteins. Interacts with CABP4; in the absence of calcium. Interacts with DNM1; leading to a decrease of DNM1 GTPase activity. Interacts with LCK; this interaction plays a crucial role in activation of LCK. Interacts with FYN. Interacts with RAB11A; in a cell cycle-dependent manner. Interacts with LYN (via SH2 and SH3 domains); leading to LYN activation. Found in a complex with ABL1, ABL2, CRK and UNC119; leading to the inhibition of CRK phosphorylation by ABL kinases. Interacts with CD44. Interacts with KLHL18 (via kelch repeats). Interacts with PPP3CA, PPP3CB and PPP3CC. Interacts with USP48; this interaction promotes UNC119 stability. In terms of processing, phosphorylation suppresses its interaction with KLHL18 and down-regulates its KLHL18-mediated degradation. Phosphorylated more under light conditions than dark conditions. Dephosphorylated by calcineurin. As to expression, localized in photoreceptor synapses in the outer plexiform layer of the retina.

It localises to the cytoplasm. The protein resides in the cytoskeleton. It is found in the microtubule organizing center. Its subcellular location is the centrosome. The protein localises to the spindle. It localises to the spindle pole. In terms of biological role, involved in synaptic functions in photoreceptor cells, the signal transduction in immune cells as a Src family kinase activator, endosome recycling, the uptake of bacteria and endocytosis, protein trafficking in sensory neurons and as lipid-binding chaperone with specificity for a diverse subset of myristoylated proteins. Specifically binds the myristoyl moiety of a subset of N-terminally myristoylated proteins and is required for their localization. Binds myristoylated GNAT1 and is required for G-protein localization and trafficking in sensory neurons. Probably plays a role in trafficking proteins in photoreceptor cells. Plays important roles in mediating Src family kinase signals for the completion of cytokinesis via RAB11A. This chain is Protein unc-119 homolog A (Unc119), found in Mus musculus (Mouse).